Here is a 1225-residue protein sequence, read N- to C-terminus: Cytosolic carboxypeptidase 1 (1225 aa).

A compositionally biased stretch (acidic residues) spans 366 to 392 (DDVVDESDDNEDTDAETEAEAENEDSD). The interval 366-398 (DDVVDESDDNEDTDAETEAEAENEDSDQICKND) is disordered. The region spanning 842-1132 (YPYTYSTLKM…KFCVGLLRLK (291 aa)) is the Peptidase M14 domain. The Zn(2+) site is built by histidine 914, glutamate 917, and histidine 1011. The active-site Proton donor/acceptor is glutamate 1096. A compositionally biased stretch (acidic residues) spans 1181-1193 (YSAESNDDVDPDL). The segment at 1181–1225 (YSAESNDDVDPDLPENIGDFETSTLEEESFSDSEITRTHMSGQST) is disordered.

It belongs to the peptidase M14 family. It depends on Zn(2+) as a cofactor.

It localises to the cytoplasm. The protein resides in the cytosol. The protein localises to the nucleus. It is found in the mitochondrion. The enzyme catalyses (L-glutamyl)(n+1)-gamma-L-glutamyl-L-glutamyl-[protein] + H2O = (L-glutamyl)(n)-gamma-L-glutamyl-L-glutamyl-[protein] + L-glutamate. It carries out the reaction C-terminal L-alpha-aminoacyl-L-glutamyl-L-glutamyl-[tubulin] + H2O = C-terminal L-alpha-aminoacyl-L-glutamyl-[tubulin] + L-glutamate. In terms of biological role, metallocarboxypeptidase that mediates protein deglutamylation of tubulin and non-tubulin target proteins. Catalyzes the removal of polyglutamate side chains present on the gamma-carboxyl group of glutamate residues within the C-terminal tail of alpha- and beta-tubulin. Specifically cleaves tubulin long-side-chains, while it is not able to remove the branching point glutamate. Also catalyzes the removal of polyglutamate residues from the carboxy-terminus of alpha-tubulin as well as non-tubulin proteins. The protein is Cytosolic carboxypeptidase 1 (agtpbp1) of Xenopus laevis (African clawed frog).